The chain runs to 366 residues: Chorismate synthase (366 aa).

R48 and R54 together coordinate NADP(+). FMN contacts are provided by residues 125–127 (RSS), 238–239 (NA), G278, 293–297 (KPTSS), and R319.

It belongs to the chorismate synthase family. In terms of assembly, homotetramer. It depends on FMNH2 as a cofactor.

The enzyme catalyses 5-O-(1-carboxyvinyl)-3-phosphoshikimate = chorismate + phosphate. The protein operates within metabolic intermediate biosynthesis; chorismate biosynthesis; chorismate from D-erythrose 4-phosphate and phosphoenolpyruvate: step 7/7. In terms of biological role, catalyzes the anti-1,4-elimination of the C-3 phosphate and the C-6 proR hydrogen from 5-enolpyruvylshikimate-3-phosphate (EPSP) to yield chorismate, which is the branch point compound that serves as the starting substrate for the three terminal pathways of aromatic amino acid biosynthesis. This reaction introduces a second double bond into the aromatic ring system. The polypeptide is Chorismate synthase (Laribacter hongkongensis (strain HLHK9)).